A 717-amino-acid polypeptide reads, in one-letter code: Ribosomal RNA large subunit methyltransferase K/L (717 aa).

The region spanning 45–142 (GAYRICLGSR…DKRSGVQTVQ (98 aa)) is the THUMP domain.

Belongs to the methyltransferase superfamily. RlmKL family.

Its subcellular location is the cytoplasm. It catalyses the reaction guanosine(2445) in 23S rRNA + S-adenosyl-L-methionine = N(2)-methylguanosine(2445) in 23S rRNA + S-adenosyl-L-homocysteine + H(+). The catalysed reaction is guanosine(2069) in 23S rRNA + S-adenosyl-L-methionine = N(2)-methylguanosine(2069) in 23S rRNA + S-adenosyl-L-homocysteine + H(+). Functionally, specifically methylates the guanine in position 2445 (m2G2445) and the guanine in position 2069 (m7G2069) of 23S rRNA. This is Ribosomal RNA large subunit methyltransferase K/L from Hahella chejuensis (strain KCTC 2396).